Reading from the N-terminus, the 284-residue chain is Efem/EfeO family lipoprotein (284 aa).

The signal sequence occupies residues 1 to 17; it reads MKKLTTLLLASTLLIAA. Cys-18 carries the N-palmitoyl cysteine lipid modification. A lipid anchor (S-diacylglycerol cysteine) is attached at Cys-18.

Belongs to the EfeM/EfeO family.

Its subcellular location is the cell membrane. The polypeptide is Efem/EfeO family lipoprotein (Staphylococcus aureus (strain USA300)).